An 870-amino-acid polypeptide reads, in one-letter code: DNA mismatch repair protein MutS (870 aa).

608–615 (GPNMAGKS) is a binding site for ATP.

Belongs to the DNA mismatch repair MutS family.

Functionally, this protein is involved in the repair of mismatches in DNA. It is possible that it carries out the mismatch recognition step. This protein has a weak ATPase activity. The polypeptide is DNA mismatch repair protein MutS (Persephonella marina (strain DSM 14350 / EX-H1)).